The primary structure comprises 215 residues: Riboflavin synthase (215 aa).

2 Lumazine-binding repeats span residues 1 to 96 (MFTG…FGGH) and 97 to 193 (IVSG…EQFL). Residues 4–6 (GII), 47–49 (CLT), 61–66 (DVMSET), 100–102 (GHI), lysine 135, 144–146 (SLT), and 158–163 (SIIPHT) each bind 2,4-dihydroxypteridine.

Homotrimer.

The catalysed reaction is 2 6,7-dimethyl-8-(1-D-ribityl)lumazine + H(+) = 5-amino-6-(D-ribitylamino)uracil + riboflavin. It participates in cofactor biosynthesis; riboflavin biosynthesis; riboflavin from 2-hydroxy-3-oxobutyl phosphate and 5-amino-6-(D-ribitylamino)uracil: step 2/2. Functionally, catalyzes the dismutation of two molecules of 6,7-dimethyl-8-ribityllumazine, resulting in the formation of riboflavin and 5-amino-6-(D-ribitylamino)uracil. This Actinobacillus pleuropneumoniae (Haemophilus pleuropneumoniae) protein is Riboflavin synthase (ribE).